A 946-amino-acid chain; its full sequence is Increased sodium tolerance protein 2 (946 aa).

Residues 1–121 (MSQTITSLDP…SNLTNNPKQS (121 aa)) are Cytoplasmic-facing. Residues 122–142 (LYFAFLQNYIKWLIPFSFFGL) traverse the membrane as a helical segment. The Extracellular portion of the chain corresponds to 143 to 153 (SIRFLSNFTYE). Residues 154 to 174 (FNSTYSLFAILWTLSFTAFWL) traverse the membrane as a helical segment. Residues 175 to 217 (YKYEPFWSDRLSKYSSFSTIEFLQDKQKAQKKASSVIMLKKCC) lie on the Cytoplasmic side of the membrane. The chain crosses the membrane as a helical span at residues 218–238 (FIPVALLFGAILLSFQLYCFA). Topologically, residues 239–253 (LEIFIKQIYNGPMIS) are extracellular. The chain crosses the membrane as a helical span at residues 254–274 (ILSFLPTILICTFTPVLTVIY). Residues 275–302 (NKYFVEPMTKWENHSSVVNAKKSKEAKN) are Cytoplasmic-facing. The helical transmembrane segment at 303–323 (FVIIFLSSYVPLLITLFLYLP) threads the bilayer. Topologically, residues 324-447 (MGHLLTAEIR…DANFKKLLLQ (124 aa)) are extracellular. The helical transmembrane segment at 448–468 (FGYLVMFSTIWPLAPFICLIV) threads the bilayer. Topologically, residues 469-505 (NLIVYQVDLRKAVLYSKPEYFPFPIYDKPSSVSNTQK) are cytoplasmic. Residues 506-526 (LTVGLWNSVLVMFSILGCVIT) form a helical membrane-spanning segment. The Extracellular portion of the chain corresponds to 527–563 (ATLTYMYQSCNIPGVGAHTSIHTNKAWYLANPINHSW). A helical membrane pass occupies residues 564–584 (INIVLYAVFIEHVSVAIFFLF). Topologically, residues 585–946 (SSILKSSHDD…GLLHKLKKKL (362 aa)) are cytoplasmic. Disordered stretches follow at residues 617–638 (EKIP…RKGS) and 665–718 (THAN…TEKR). A compositionally biased stretch (basic and acidic residues) spans 628-638 (NEKELVQRKGS). At serine 638 the chain carries Phosphoserine. The segment covering 671–689 (PSSLSSASSPSLSSSSSSS) has biased composition (low complexity). Threonine 701 is modified (phosphothreonine). Phosphoserine occurs at positions 704 and 720. Threonine 726 bears the Phosphothreonine mark. Serine 729 carries the post-translational modification Phosphoserine. Residue tyrosine 730 is modified to Phosphotyrosine. Phosphoserine is present on serine 757. The interval 759 to 784 (RDAKSSAESSNATNNNTLGTESKLLP) is disordered. Positions 764–775 (SAESSNATNNNT) are enriched in low complexity. A phosphoserine mark is found at serine 793, serine 844, and serine 847. Positions 846 to 946 (VSVATEQTKK…GLLHKLKKKL (101 aa)) are disordered. Threonine 850 carries the post-translational modification Phosphothreonine. Polar residues predominate over residues 859-868 (STKNGPSRSI). Residues 884–893 (TTTTTTTDAT) are compositionally biased toward low complexity. Over residues 895-905 (PHHHHHHHRHR) the composition is skewed to basic residues. Positions 916–927 (SKTTESSSSSSA) are enriched in low complexity. The span at 931-946 (KPKHKKGLLHKLKKKL) shows a compositional bias: basic residues.

As to quaternary structure, interacts with BTN2.

The protein resides in the cell membrane. Its function is as follows. May be involved in ion homeostasis together with BTN1 or BTN2. This Saccharomyces cerevisiae (strain ATCC 204508 / S288c) (Baker's yeast) protein is Increased sodium tolerance protein 2 (IST2).